The following is a 382-amino-acid chain: Lipid-A-disaccharide synthase (382 aa).

Belongs to the LpxB family.

It carries out the reaction 2-N,3-O-bis[(3R)-3-hydroxytetradecanoyl]-alpha-D-glucosaminyl 1-phosphate + UDP-2-N,3-O-bis[(3R)-3-hydroxytetradecanoyl]-alpha-D-glucosamine = lipid A disaccharide (E. coli) + UDP + H(+). The catalysed reaction is a lipid X + a UDP-2-N,3-O-bis[(3R)-3-hydroxyacyl]-alpha-D-glucosamine = a lipid A disaccharide + UDP + H(+). It participates in glycolipid biosynthesis; lipid IV(A) biosynthesis; lipid IV(A) from (3R)-3-hydroxytetradecanoyl-[acyl-carrier-protein] and UDP-N-acetyl-alpha-D-glucosamine: step 5/6. In terms of biological role, condensation of UDP-2,3-diacylglucosamine and 2,3-diacylglucosamine-1-phosphate to form lipid A disaccharide, a precursor of lipid A, a phosphorylated glycolipid that anchors the lipopolysaccharide to the outer membrane of the cell. The sequence is that of Lipid-A-disaccharide synthase from Sodalis glossinidius (strain morsitans).